The sequence spans 567 residues: NADH-ubiquinone oxidoreductase chain 2 (567 aa).

The next 14 membrane-spanning stretches (helical) occupy residues 2-22 (LILSLFILIIYSSIINNIDTI), 43-63 (IGIIIILYSLYIFKDISLSYI), 85-105 (NIFNIYIIFLLLIVIISLLSI), 133-153 (LNIYYISIIIFNIIGLILLLT), 158-178 (ISIFISIELQSYSLYILTGII), 189-209 (LFYYLIGGIGSIIILYGISLL), 236-256 (ILIGWLFIIIGLLIKIGAAPM), 274-294 (YISLIPKISILSYILLIILNL), 312-332 (LIYILSIIIILSLIIGSIGGL), 340-360 (ILAYSGLLNIGYFLLIILSLI), 372-392 (IIYITQYCFNHISIFILLIIA), 423-443 (LIFCLIIIIGSFIGIPPLFGF), 459-479 (LFLSLLLIISSIISSIYYLYF), and 530-550 (VGNYITYILSSYILIILFNFI).

It belongs to the complex I subunit 2 family.

The protein localises to the mitochondrion inner membrane. The catalysed reaction is a ubiquinone + NADH + 5 H(+)(in) = a ubiquinol + NAD(+) + 4 H(+)(out). Core subunit of the mitochondrial membrane respiratory chain NADH dehydrogenase (Complex I) that is believed to belong to the minimal assembly required for catalysis. Complex I functions in the transfer of electrons from NADH to the respiratory chain. The immediate electron acceptor for the enzyme is believed to be ubiquinone. In Wickerhamomyces canadensis (Yeast), this protein is NADH-ubiquinone oxidoreductase chain 2 (ND2).